A 78-amino-acid chain; its full sequence is Small ribosomal subunit protein uS15 (78 aa).

It belongs to the universal ribosomal protein uS15 family. Part of the 30S ribosomal subunit. Forms a bridge to the 50S subunit in the 70S ribosome, contacting the 23S rRNA.

Its function is as follows. One of the primary rRNA binding proteins, it binds directly to 16S rRNA where it helps nucleate assembly of the platform of the 30S subunit by binding and bridging several RNA helices of the 16S rRNA. Forms an intersubunit bridge (bridge B4) with the 23S rRNA of the 50S subunit in the ribosome. The chain is Small ribosomal subunit protein uS15 from Karelsulcia muelleri (strain GWSS) (Sulcia muelleri).